The primary structure comprises 183 residues: MAEAEHTASTPGGESSRRDFLIYGTTAVGAVGVALAVWPFIDFMNPAADTLALASTEVDVSAIAEGQAITVTWRGKPVFVRHRTQKEIVVARAVDPASLRDPQTDEARVQQAQWLVMVGVCTHLGCIPLGQKAGDPKGDFDGWFCPCHGSHYDSAGRIRKGPAPLNLPVPPYAFTDDTTVLIG.

Residues 21–41 (LIYGTTAVGAVGVALAVWPFI) form a helical membrane-spanning segment. Residues 88-181 (IVVARAVDPA…YAFTDDTTVL (94 aa)) form the Rieske domain. Cysteine 121, histidine 123, cysteine 145, and histidine 148 together coordinate [2Fe-2S] cluster. Cysteine 126 and cysteine 147 are oxidised to a cystine.

It belongs to the Rieske iron-sulfur protein family. The main subunits of complex b-c1 are: cytochrome b, cytochrome c1 and the Rieske protein. [2Fe-2S] cluster is required as a cofactor.

The protein resides in the cell inner membrane. It carries out the reaction a quinol + 2 Fe(III)-[cytochrome c](out) = a quinone + 2 Fe(II)-[cytochrome c](out) + 2 H(+)(out). Functionally, component of the ubiquinol-cytochrome c reductase complex (complex III or cytochrome b-c1 complex), which is a respiratory chain that generates an electrochemical potential coupled to ATP synthesis. This is Ubiquinol-cytochrome c reductase iron-sulfur subunit (petA) from Rhodospirillum rubrum.